The following is a 400-amino-acid chain: Large envelope protein (400 aa).

M1 is modified (N-acetylmethionine). Disordered regions lie at residues 1-20 (MGGW…SVPN) and 88-115 (VSTI…LRDS). The N-myristoyl glycine; by host moiety is linked to residue G2. The tract at residues 2–119 (GGWSSKPRKG…PPLRDSHPQA (118 aa)) is pre-S1. The interval 2–174 (GGWSSKPRKG…SARTGDPVTN (173 aa)) is pre-S. Residues 2-181 (GGWSSKPRKG…VTNMENITSG (180 aa)) lie on the Virion surface; in external conformation side of the membrane. At 2-253 (GGWSSKPRKG…PGYRWMCLRR (252 aa)) the chain is on the intravirion; in internal conformation side. W4 carries an N-linked (GlcNAc...) asparagine glycan. Positions 88–106 (VSTIPPPASTNRQSGRQPT) are enriched in polar residues. Residues 120-174 (MQWNSTAFHQTLQDPRVRGLYLPAGGSSSGTVNPAPNIASHISSISARTGDPVTN) form a pre-S2 region. The chain crosses the membrane as a helical span at residues 182 to 202 (FLGPLLVLQAGFFLLTRILTI). Topologically, residues 203–253 (PQSLDSWWTSLNFLGGSPVCLGQNSQSPTSNHSPTSCPPICPGYRWMCLRR) are intravirion; in external conformation. Residues 254-274 (FIIFLFILLLCLIFLLVLLDY) traverse the membrane as a helical segment. At 275–348 (QGMLPVCPLI…WASVRFSWLS (74 aa)) the chain is on the virion surface side. The N-linked (GlcNAc...) asparagine; by host glycan is linked to N320. A helical membrane pass occupies residues 349–369 (LLVPFVQWFVGLSPTVWLSAI). The Intravirion segment spans residues 370 to 375 (WMMWYW). Residues 376 to 398 (GPSLYSIVRPFIPLLPIFFCLWV) traverse the membrane as a helical segment. Topologically, residues 399–400 (YI) are virion surface.

It belongs to the orthohepadnavirus major surface antigen family. In its internal form (Li-HBsAg), interacts with the capsid protein and with the isoform S. Interacts with host chaperone CANX. In terms of assembly, associates with host chaperone CANX through its pre-S2 N glycan; this association may be essential for isoform M proper secretion. As to quaternary structure, interacts with isoform L. Interacts with the antigens of satellite virus HDV (HDVAgs); this interaction is required for encapsidation of HDV genomic RNA. In terms of processing, isoform M is N-terminally acetylated by host at a ratio of 90%, and N-glycosylated by host at the pre-S2 region. Post-translationally, myristoylated.

The protein resides in the virion membrane. The large envelope protein exists in two topological conformations, one which is termed 'external' or Le-HBsAg and the other 'internal' or Li-HBsAg. In its external conformation the protein attaches the virus to cell receptors and thereby initiating infection. This interaction determines the species specificity and liver tropism. This attachment induces virion internalization predominantly through caveolin-mediated endocytosis. The large envelope protein also assures fusion between virion membrane and endosomal membrane. In its internal conformation the protein plays a role in virion morphogenesis and mediates the contact with the nucleocapsid like a matrix protein. In terms of biological role, the middle envelope protein plays an important role in the budding of the virion. It is involved in the induction of budding in a nucleocapsid independent way. In this process the majority of envelope proteins bud to form subviral lipoprotein particles of 22 nm of diameter that do not contain a nucleocapsid. This chain is Large envelope protein, found in Homo sapiens (Human).